The chain runs to 1763 residues: Non-reducing polyketide synthase PKS19 (1763 aa).

The N-terminal acylcarrier protein transacylase domain (SAT) stretch occupies residues 20–261 (GDQRNLFRKL…PMKKVQGMWH (242 aa)). Positions 390–822 (SSKIAVVGMA…GGNTSIIIEE (433 aa)) constitute a Ketosynthase family 3 (KS3) domain. Active-site for beta-ketoacyl synthase activity residues include cysteine 561, histidine 696, and histidine 740. The interval 922–1227 (FAFTGQGTFY…QRDTDNWLTL (306 aa)) is malonyl-CoA:ACP transacylase (MAT) domain. The N-terminal hotdog fold stretch occupies residues 1307-1439 (HRLISEQYTD…VFYEDPSSWL (133 aa)). Residues 1307 to 1609 (HRLISEQYTD…FLQWPRVMLN (303 aa)) form the PKS/mFAS DH domain. The interval 1334–1588 (GVVDGHAMNG…FVGDVYVLQG (255 aa)) is product template (PT) domain. The active-site Proton acceptor; for dehydratase activity is the histidine 1339. The C-terminal hotdog fold stretch occupies residues 1461–1609 (VTGKASKLTT…FLQWPRVMLN (149 aa)). Residue aspartate 1522 is the Proton donor; for dehydratase activity of the active site. The tract at residues 1619–1690 (AKPAAKVPGK…MEELPSPPAG (72 aa)) is disordered. Basic residues predominate over residues 1635–1647 (PHFKPHHVSRHKP). The Carrier domain occupies 1689 to 1763 (AGMNDDMEKA…TIQDLKALLR (75 aa)). Serine 1726 is subject to O-(pantetheine 4'-phosphoryl)serine.

Its function is as follows. Non-reducing polyketide synthase that mediates the biosynthesis of alternariol (AOH), a micotoxin that seems not to be involved in virulence and oxidative stress tolerance. PKS19 alone is sufficient for AOH synthesis which is initiated by priming with acetyl-CoA, followed by sequential condensations of 6 malonyl-CoA units. The sequence is that of Non-reducing polyketide synthase PKS19 from Phaeosphaeria nodorum (strain SN15 / ATCC MYA-4574 / FGSC 10173) (Glume blotch fungus).